Here is a 282-residue protein sequence, read N- to C-terminus: Undecaprenyl-diphosphatase (282 aa).

6 consecutive transmembrane segments (helical) span residues 51–71, 87–107, 115–135, 191–211, 229–249, and 259–279; these read TLVA…AAVI, MGWM…LFET, SLYW…LAEG, ATAA…AGLY, NILV…AFLL, and IFIA…ATGV.

The protein belongs to the UppP family.

Its subcellular location is the cell inner membrane. The enzyme catalyses di-trans,octa-cis-undecaprenyl diphosphate + H2O = di-trans,octa-cis-undecaprenyl phosphate + phosphate + H(+). Its function is as follows. Catalyzes the dephosphorylation of undecaprenyl diphosphate (UPP). Confers resistance to bacitracin. This is Undecaprenyl-diphosphatase from Pelodictyon phaeoclathratiforme (strain DSM 5477 / BU-1).